Consider the following 414-residue polypeptide: Esterase FrsA (414 aa).

The protein belongs to the FrsA family.

It catalyses the reaction a carboxylic ester + H2O = an alcohol + a carboxylate + H(+). Its function is as follows. Catalyzes the hydrolysis of esters. In Shigella dysenteriae serotype 1 (strain Sd197), this protein is Esterase FrsA.